The chain runs to 347 residues: Selenide, water dikinase (347 aa).

Residue C17 is part of the active site. ATP is bound by residues K20 and 48–50 (TRD). D51 lines the Mg(2+) pocket. Residues D68, D91, and 139–141 (GHS) each bind ATP. A Mg(2+)-binding site is contributed by D91. D227 serves as a coordination point for Mg(2+).

This sequence belongs to the selenophosphate synthase 1 family. Class I subfamily. In terms of assembly, homodimer. The cofactor is Mg(2+).

It carries out the reaction hydrogenselenide + ATP + H2O = selenophosphate + AMP + phosphate + 2 H(+). Its function is as follows. Synthesizes selenophosphate from selenide and ATP. This Salmonella typhi protein is Selenide, water dikinase.